The primary structure comprises 563 residues: Sulfite reductase [NADPH] hemoprotein beta-component (563 aa).

The [4Fe-4S] cluster site is built by cysteine 427, cysteine 433, cysteine 472, and cysteine 476. Cysteine 476 contacts siroheme.

Belongs to the nitrite and sulfite reductase 4Fe-4S domain family. As to quaternary structure, alpha(8)-beta(8). The alpha component is a flavoprotein, the beta component is a hemoprotein. Requires siroheme as cofactor. It depends on [4Fe-4S] cluster as a cofactor.

The catalysed reaction is hydrogen sulfide + 3 NADP(+) + 3 H2O = sulfite + 3 NADPH + 4 H(+). Its pathway is sulfur metabolism; hydrogen sulfide biosynthesis; hydrogen sulfide from sulfite (NADPH route): step 1/1. Component of the sulfite reductase complex that catalyzes the 6-electron reduction of sulfite to sulfide. This is one of several activities required for the biosynthesis of L-cysteine from sulfate. This is Sulfite reductase [NADPH] hemoprotein beta-component from Shewanella frigidimarina (strain NCIMB 400).